The primary structure comprises 99 residues: Aspartyl/glutamyl-tRNA(Asn/Gln) amidotransferase subunit C (99 aa).

Belongs to the GatC family. In terms of assembly, heterotrimer of A, B and C subunits.

The enzyme catalyses L-glutamyl-tRNA(Gln) + L-glutamine + ATP + H2O = L-glutaminyl-tRNA(Gln) + L-glutamate + ADP + phosphate + H(+). It catalyses the reaction L-aspartyl-tRNA(Asn) + L-glutamine + ATP + H2O = L-asparaginyl-tRNA(Asn) + L-glutamate + ADP + phosphate + 2 H(+). Its function is as follows. Allows the formation of correctly charged Asn-tRNA(Asn) or Gln-tRNA(Gln) through the transamidation of misacylated Asp-tRNA(Asn) or Glu-tRNA(Gln) in organisms which lack either or both of asparaginyl-tRNA or glutaminyl-tRNA synthetases. The reaction takes place in the presence of glutamine and ATP through an activated phospho-Asp-tRNA(Asn) or phospho-Glu-tRNA(Gln). This chain is Aspartyl/glutamyl-tRNA(Asn/Gln) amidotransferase subunit C, found in Methylibium petroleiphilum (strain ATCC BAA-1232 / LMG 22953 / PM1).